Consider the following 157-residue polypeptide: Transcription elongation factor GreA (157 aa).

Residues 47 to 75 (ENAEYDAAREKQGQIEDRITELENILSNA) are a coiled coil.

It belongs to the GreA/GreB family.

Necessary for efficient RNA polymerase transcription elongation past template-encoded arresting sites. The arresting sites in DNA have the property of trapping a certain fraction of elongating RNA polymerases that pass through, resulting in locked ternary complexes. Cleavage of the nascent transcript by cleavage factors such as GreA or GreB allows the resumption of elongation from the new 3'terminus. GreA releases sequences of 2 to 3 nucleotides. The sequence is that of Transcription elongation factor GreA from Mycoplasmopsis pulmonis (strain UAB CTIP) (Mycoplasma pulmonis).